The primary structure comprises 516 residues: Putative GTP-binding protein 6 (516 aa).

Positions 18–39 (GRGRSAPRAAAPSCPARALAAV) are enriched in low complexity. The segment at 18–82 (GRGRSAPRAA…PEDADENAEE (65 aa)) is disordered. Residues 57 to 67 (LRADGGRSRTG) show a composition bias toward basic and acidic residues. A compositionally biased stretch (acidic residues) spans 68-82 (DDEEEPEDADENAEE). The Hflx-type G domain occupies 295-459 (PVISVVGYTN…ELDAAVLKAT (165 aa)). GTP-binding positions include 301–308 (GYTNCGKT), 327–331 (FATLD), 349–352 (DTIG), 418–421 (NKVD), and 437–439 (SAL). Mg(2+) is bound by residues Thr308 and Thr329.

It belongs to the TRAFAC class OBG-HflX-like GTPase superfamily. HflX GTPase family. Mg(2+) is required as a cofactor. In terms of tissue distribution, ubiquitously expressed.

The sequence is that of Putative GTP-binding protein 6 (GTPBP6) from Homo sapiens (Human).